A 487-amino-acid polypeptide reads, in one-letter code: Protein nucleotidyltransferase YdiU (487 aa).

Residues Gly90, Gly92, Arg93, Lys113, Asp125, Gly126, Arg176, and Arg183 each coordinate ATP. The active-site Proton acceptor is Asp252. Asn253 and Asp262 together coordinate Mg(2+). ATP is bound at residue Asp262.

The protein belongs to the SELO family. Requires Mg(2+) as cofactor. Mn(2+) is required as a cofactor.

It carries out the reaction L-seryl-[protein] + ATP = 3-O-(5'-adenylyl)-L-seryl-[protein] + diphosphate. The enzyme catalyses L-threonyl-[protein] + ATP = 3-O-(5'-adenylyl)-L-threonyl-[protein] + diphosphate. It catalyses the reaction L-tyrosyl-[protein] + ATP = O-(5'-adenylyl)-L-tyrosyl-[protein] + diphosphate. The catalysed reaction is L-histidyl-[protein] + UTP = N(tele)-(5'-uridylyl)-L-histidyl-[protein] + diphosphate. It carries out the reaction L-seryl-[protein] + UTP = O-(5'-uridylyl)-L-seryl-[protein] + diphosphate. The enzyme catalyses L-tyrosyl-[protein] + UTP = O-(5'-uridylyl)-L-tyrosyl-[protein] + diphosphate. Nucleotidyltransferase involved in the post-translational modification of proteins. It can catalyze the addition of adenosine monophosphate (AMP) or uridine monophosphate (UMP) to a protein, resulting in modifications known as AMPylation and UMPylation. The chain is Protein nucleotidyltransferase YdiU from Pseudomonas fluorescens (strain ATCC BAA-477 / NRRL B-23932 / Pf-5).